Reading from the N-terminus, the 215-residue chain is ER lumen protein-retaining receptor B (215 aa).

6 helical membrane passes run 6-26, 55-77, 98-118, 120-140, 149-169, and 178-198; these read LAGDMTHLASVLVLLLKIHTI, FVSLYNTSMKLVFLGSSFSIVWY, WFLVLPCFLLALLIHEKFTFL, VLWTSSLYLEAVAILPQLVLL, LTGQYIFLLGGYRGLYILNWI, and FVHWITWIAGFVQTLLYADFF.

It belongs to the ERD2 family.

The protein localises to the golgi apparatus membrane. Its subcellular location is the endoplasmic reticulum membrane. Functionally, determines the specificity of the luminal endoplasmic reticulum protein retention system. Required for the retro-transport of calreticulin-3 (CRT3) from the Golgi to the ER. Specifically required for elongation factor Tu receptor (EFR) function in response to the pathogen-associated molecular pattern (PAMP) elf18. This chain is ER lumen protein-retaining receptor B (ERD2B), found in Arabidopsis thaliana (Mouse-ear cress).